Consider the following 295-residue polypeptide: Aspartate carbamoyltransferase catalytic subunit (295 aa).

2 residues coordinate carbamoyl phosphate: arginine 49 and threonine 50. An L-aspartate-binding site is contributed by lysine 77. Residues arginine 99, histidine 127, and glutamine 130 each contribute to the carbamoyl phosphate site. Positions 161 and 212 each coordinate L-aspartate. 2 residues coordinate carbamoyl phosphate: glycine 251 and proline 252.

This sequence belongs to the aspartate/ornithine carbamoyltransferase superfamily. ATCase family. Heterododecamer (2C3:3R2) of six catalytic PyrB chains organized as two trimers (C3), and six regulatory PyrI chains organized as three dimers (R2).

The catalysed reaction is carbamoyl phosphate + L-aspartate = N-carbamoyl-L-aspartate + phosphate + H(+). Its pathway is pyrimidine metabolism; UMP biosynthesis via de novo pathway; (S)-dihydroorotate from bicarbonate: step 2/3. Catalyzes the condensation of carbamoyl phosphate and aspartate to form carbamoyl aspartate and inorganic phosphate, the committed step in the de novo pyrimidine nucleotide biosynthesis pathway. This is Aspartate carbamoyltransferase catalytic subunit from Campylobacter jejuni subsp. jejuni serotype O:2 (strain ATCC 700819 / NCTC 11168).